The sequence spans 362 residues: MERITVTLGERSYPITIAAGLFNEPASFLPLKSGDQVMLVTNETLAPLYLDKVRGVLQRAGVNVDSVILPDGERYKSLTVLDTVFTALLKKPHGRDTTLVALGGGVIGDLTGFAAASYQRGVRFIQVPTTLLSQVDSSVGGKTAVNHPLGKNMIGAFYQPASVVVDLDCLKTLPARELASGLAEVIKYGIILDADFFTWLEGNLDALLRLDGPAMAYCIRRCCELKAEVVAADEREAGLRALLNLGHTFGHAIEAEMGYGNWLHGEAVAAGMVMAACTSERLGQFSSADTQRIIALLRRAGLPVNGPREMSAQAYLPHMLRDKKVLAGELRLVLPLAIGKSEVRGGVSHEVVLSAIADCQQA.

NAD(+)-binding positions include 71–76 (DGERYK), 105–109 (GVIGD), 129–130 (TT), Lys142, Lys151, and 169–172 (CLKT). Zn(2+) is bound by residues Glu184, His247, and His264.

This sequence belongs to the sugar phosphate cyclases superfamily. Dehydroquinate synthase family. Requires Co(2+) as cofactor. It depends on Zn(2+) as a cofactor. NAD(+) serves as cofactor.

Its subcellular location is the cytoplasm. The enzyme catalyses 7-phospho-2-dehydro-3-deoxy-D-arabino-heptonate = 3-dehydroquinate + phosphate. Its pathway is metabolic intermediate biosynthesis; chorismate biosynthesis; chorismate from D-erythrose 4-phosphate and phosphoenolpyruvate: step 2/7. Catalyzes the conversion of 3-deoxy-D-arabino-heptulosonate 7-phosphate (DAHP) to dehydroquinate (DHQ). The chain is 3-dehydroquinate synthase from Salmonella arizonae (strain ATCC BAA-731 / CDC346-86 / RSK2980).